Reading from the N-terminus, the 145-residue chain is D-aminoacyl-tRNA deacylase (145 aa).

A Gly-cisPro motif, important for rejection of L-amino acids motif is present at residues 137-138; sequence GP.

Belongs to the DTD family. In terms of assembly, homodimer.

The protein resides in the cytoplasm. It carries out the reaction glycyl-tRNA(Ala) + H2O = tRNA(Ala) + glycine + H(+). The enzyme catalyses a D-aminoacyl-tRNA + H2O = a tRNA + a D-alpha-amino acid + H(+). An aminoacyl-tRNA editing enzyme that deacylates mischarged D-aminoacyl-tRNAs. Also deacylates mischarged glycyl-tRNA(Ala), protecting cells against glycine mischarging by AlaRS. Acts via tRNA-based rather than protein-based catalysis; rejects L-amino acids rather than detecting D-amino acids in the active site. By recycling D-aminoacyl-tRNA to D-amino acids and free tRNA molecules, this enzyme counteracts the toxicity associated with the formation of D-aminoacyl-tRNA entities in vivo and helps enforce protein L-homochirality. The chain is D-aminoacyl-tRNA deacylase from Pseudomonas savastanoi pv. phaseolicola (strain 1448A / Race 6) (Pseudomonas syringae pv. phaseolicola (strain 1448A / Race 6)).